The chain runs to 481 residues: Glutamate--tRNA ligase (481 aa).

Residues 9 to 19 carry the 'HIGH' region motif; it reads PSPTGNLHIGT. The 'KMSKS' region signature appears at 247–251; sequence KLSKR. Lys250 provides a ligand contact to ATP.

It belongs to the class-I aminoacyl-tRNA synthetase family. Glutamate--tRNA ligase type 1 subfamily. As to quaternary structure, monomer.

It is found in the cytoplasm. It carries out the reaction tRNA(Glu) + L-glutamate + ATP = L-glutamyl-tRNA(Glu) + AMP + diphosphate. Its function is as follows. Catalyzes the attachment of glutamate to tRNA(Glu) in a two-step reaction: glutamate is first activated by ATP to form Glu-AMP and then transferred to the acceptor end of tRNA(Glu). The sequence is that of Glutamate--tRNA ligase from Trichormus variabilis (strain ATCC 29413 / PCC 7937) (Anabaena variabilis).